Here is a 145-residue protein sequence, read N- to C-terminus: Large ribosomal subunit protein uL16 (145 aa).

This sequence belongs to the universal ribosomal protein uL16 family. In terms of assembly, part of the 50S ribosomal subunit.

In terms of biological role, binds 23S rRNA and is also seen to make contacts with the A and possibly P site tRNAs. The sequence is that of Large ribosomal subunit protein uL16 from Agathobacter rectalis (strain ATCC 33656 / DSM 3377 / JCM 17463 / KCTC 5835 / VPI 0990) (Eubacterium rectale).